Consider the following 142-residue polypeptide: Cell wall-binding protein YqgA (142 aa).

The N-terminal stretch at 1–28 (MKQGKFSVFLILLLMLTLVVAPKEKAEA) is a signal peptide.

In terms of assembly, found in a complex with F(1)F(0) ATP synthase and SpoIIIJ and YqjG.

The protein localises to the secreted. The protein resides in the cell wall. The polypeptide is Cell wall-binding protein YqgA (yqgA) (Bacillus subtilis (strain 168)).